A 171-amino-acid chain; its full sequence is 3-hydroxydecanoyl-[acyl-carrier-protein] dehydratase (171 aa).

H70 is a catalytic residue.

This sequence belongs to the thioester dehydratase family. FabA subfamily. As to quaternary structure, homodimer.

It is found in the cytoplasm. It carries out the reaction a (3R)-hydroxyacyl-[ACP] = a (2E)-enoyl-[ACP] + H2O. The enzyme catalyses (3R)-hydroxydecanoyl-[ACP] = (2E)-decenoyl-[ACP] + H2O. It catalyses the reaction (2E)-decenoyl-[ACP] = (3Z)-decenoyl-[ACP]. It functions in the pathway lipid metabolism; fatty acid biosynthesis. In terms of biological role, necessary for the introduction of cis unsaturation into fatty acids. Catalyzes the dehydration of (3R)-3-hydroxydecanoyl-ACP to E-(2)-decenoyl-ACP and then its isomerization to Z-(3)-decenoyl-ACP. Can catalyze the dehydratase reaction for beta-hydroxyacyl-ACPs with saturated chain lengths up to 16:0, being most active on intermediate chain length. In Chromohalobacter salexigens (strain ATCC BAA-138 / DSM 3043 / CIP 106854 / NCIMB 13768 / 1H11), this protein is 3-hydroxydecanoyl-[acyl-carrier-protein] dehydratase.